The primary structure comprises 448 residues: JmjC domain-containing protein D (448 aa).

The region spanning 305 to 448 (EQIPQLRNDI…SLSQSFSIFP (144 aa)) is the JmjC domain.

This is JmjC domain-containing protein D (jcdD) from Dictyostelium discoideum (Social amoeba).